Reading from the N-terminus, the 319-residue chain is Carbonic anhydrase, chloroplastic (319 aa).

The transit peptide at 1–98 directs the protein to the chloroplast; it reads MSTINGCLTS…AASKVAQITS (98 aa).

It belongs to the beta-class carbonic anhydrase family. In terms of assembly, homohexamer.

The protein resides in the plastid. The protein localises to the chloroplast stroma. It catalyses the reaction hydrogencarbonate + H(+) = CO2 + H2O. In terms of biological role, reversible hydration of carbon dioxide. In Spinacia oleracea (Spinach), this protein is Carbonic anhydrase, chloroplastic.